An 807-amino-acid polypeptide reads, in one-letter code: Phenylalanine--tRNA ligase beta subunit (807 aa).

The tRNA-binding domain maps to 39-153; the sequence is SARAQGVVVG…SLPPNGSPVA (115 aa). The region spanning 407–491 is the B5 domain; it reads AEAGPVLLRR…RLVGFDRFGA (85 aa). Mg(2+) is bound by residues Asp469, Asp475, Glu478, and Glu479. The FDX-ACB domain maps to 713–806; sequence PTVPFSERDL…LSKQFQAELR (94 aa).

Belongs to the phenylalanyl-tRNA synthetase beta subunit family. Type 1 subfamily. As to quaternary structure, tetramer of two alpha and two beta subunits. The cofactor is Mg(2+).

The protein localises to the cytoplasm. It carries out the reaction tRNA(Phe) + L-phenylalanine + ATP = L-phenylalanyl-tRNA(Phe) + AMP + diphosphate + H(+). This chain is Phenylalanine--tRNA ligase beta subunit, found in Synechococcus sp. (strain CC9605).